A 1180-amino-acid chain; its full sequence is Lon protease homolog 2, peroxisomal (1180 aa).

One can recognise a Lon N-terminal domain in the interval Leu19–Ile366. The tract at residues Pro416–Glu465 is disordered. Over residues Asn422 to Ser444 the composition is skewed to low complexity. Over residues Asp452 to Glu465 the composition is skewed to acidic residues. An ATP-binding site is contributed by Gly667–Thr674. The 240-residue stretch at Asn924–Glu1163 folds into the Lon proteolytic domain. Residues Ser1032 and Lys1075 contribute to the active site.

This sequence belongs to the peptidase S16 family.

The protein localises to the peroxisome matrix. The catalysed reaction is Hydrolysis of proteins in presence of ATP.. In terms of biological role, ATP-dependent serine protease that mediates the selective degradation of misfolded and unassembled polypeptides in the peroxisomal matrix. Necessary for type 2 peroxisome targeting signal (PTS2)-containing protein processing and facilitates peroxisome matrix protein import. This is Lon protease homolog 2, peroxisomal from Scheffersomyces stipitis (strain ATCC 58785 / CBS 6054 / NBRC 10063 / NRRL Y-11545) (Yeast).